The following is a 277-amino-acid chain: Release factor glutamine methyltransferase (277 aa).

S-adenosyl-L-methionine is bound by residues Gly117–Gly121, Asp140, Trp168, and Asn183. Residue Asn183 to Tyr186 coordinates substrate.

The protein belongs to the protein N5-glutamine methyltransferase family. PrmC subfamily.

It carries out the reaction L-glutaminyl-[peptide chain release factor] + S-adenosyl-L-methionine = N(5)-methyl-L-glutaminyl-[peptide chain release factor] + S-adenosyl-L-homocysteine + H(+). Functionally, methylates the class 1 translation termination release factors RF1/PrfA and RF2/PrfB on the glutamine residue of the universally conserved GGQ motif. This chain is Release factor glutamine methyltransferase, found in Shigella flexneri.